A 430-amino-acid chain; its full sequence is Serine--tRNA ligase (430 aa).

Residue 236 to 238 (TAE) coordinates L-serine. Residue 267 to 269 (RRE) participates in ATP binding. Position 290 (glutamate 290) interacts with L-serine. 354 to 357 (EISS) serves as a coordination point for ATP. Serine 390 is an L-serine binding site.

The protein belongs to the class-II aminoacyl-tRNA synthetase family. Type-1 seryl-tRNA synthetase subfamily. In terms of assembly, homodimer. The tRNA molecule binds across the dimer.

The protein resides in the cytoplasm. It catalyses the reaction tRNA(Ser) + L-serine + ATP = L-seryl-tRNA(Ser) + AMP + diphosphate + H(+). The enzyme catalyses tRNA(Sec) + L-serine + ATP = L-seryl-tRNA(Sec) + AMP + diphosphate + H(+). The protein operates within aminoacyl-tRNA biosynthesis; selenocysteinyl-tRNA(Sec) biosynthesis; L-seryl-tRNA(Sec) from L-serine and tRNA(Sec): step 1/1. Functionally, catalyzes the attachment of serine to tRNA(Ser). Is also able to aminoacylate tRNA(Sec) with serine, to form the misacylated tRNA L-seryl-tRNA(Sec), which will be further converted into selenocysteinyl-tRNA(Sec). This chain is Serine--tRNA ligase, found in Gloeothece citriformis (strain PCC 7424) (Cyanothece sp. (strain PCC 7424)).